We begin with the raw amino-acid sequence, 288 residues long: Bifunctional protein FolD (288 aa).

166–168 (GRS) serves as a coordination point for NADP(+).

This sequence belongs to the tetrahydrofolate dehydrogenase/cyclohydrolase family. Homodimer.

It catalyses the reaction (6R)-5,10-methylene-5,6,7,8-tetrahydrofolate + NADP(+) = (6R)-5,10-methenyltetrahydrofolate + NADPH. The catalysed reaction is (6R)-5,10-methenyltetrahydrofolate + H2O = (6R)-10-formyltetrahydrofolate + H(+). The protein operates within one-carbon metabolism; tetrahydrofolate interconversion. Functionally, catalyzes the oxidation of 5,10-methylenetetrahydrofolate to 5,10-methenyltetrahydrofolate and then the hydrolysis of 5,10-methenyltetrahydrofolate to 10-formyltetrahydrofolate. The polypeptide is Bifunctional protein FolD (Levilactobacillus brevis (strain ATCC 367 / BCRC 12310 / CIP 105137 / JCM 1170 / LMG 11437 / NCIMB 947 / NCTC 947) (Lactobacillus brevis)).